Here is an 886-residue protein sequence, read N- to C-terminus: Alanine--tRNA ligase (886 aa).

Zn(2+) is bound by residues H564, H568, C666, and H670.

This sequence belongs to the class-II aminoacyl-tRNA synthetase family. It depends on Zn(2+) as a cofactor.

It is found in the cytoplasm. The enzyme catalyses tRNA(Ala) + L-alanine + ATP = L-alanyl-tRNA(Ala) + AMP + diphosphate. In terms of biological role, catalyzes the attachment of alanine to tRNA(Ala) in a two-step reaction: alanine is first activated by ATP to form Ala-AMP and then transferred to the acceptor end of tRNA(Ala). Also edits incorrectly charged Ser-tRNA(Ala) and Gly-tRNA(Ala) via its editing domain. This chain is Alanine--tRNA ligase, found in Prochlorococcus marinus (strain AS9601).